Here is a 239-residue protein sequence, read N- to C-terminus: Purine nucleoside phosphorylase DeoD-type (239 aa).

H5 contacts a purine D-ribonucleoside. Residues G21, R25, R44, and 88 to 91 (RVGS) each bind phosphate. Residues 180–182 (EME) and 204–205 (SD) contribute to the a purine D-ribonucleoside site. D205 (proton donor) is an active-site residue.

This sequence belongs to the PNP/UDP phosphorylase family. As to quaternary structure, homohexamer; trimer of homodimers.

It catalyses the reaction a purine D-ribonucleoside + phosphate = a purine nucleobase + alpha-D-ribose 1-phosphate. It carries out the reaction a purine 2'-deoxy-D-ribonucleoside + phosphate = a purine nucleobase + 2-deoxy-alpha-D-ribose 1-phosphate. Functionally, catalyzes the reversible phosphorolytic breakdown of the N-glycosidic bond in the beta-(deoxy)ribonucleoside molecules, with the formation of the corresponding free purine bases and pentose-1-phosphate. This Citrobacter koseri (strain ATCC BAA-895 / CDC 4225-83 / SGSC4696) protein is Purine nucleoside phosphorylase DeoD-type.